A 444-amino-acid chain; its full sequence is Protein EVI2B (444 aa).

The signal sequence occupies residues 1–23 (MEFKYLVFIVLCQYLDNTFFSET). Topologically, residues 24–203 (EAITTEQQSL…GTAHKNNHNA (180 aa)) are extracellular. N-linked (GlcNAc...) asparagine glycans are attached at residues N63, N94, N104, and N127. Polar residues-rich tracts occupy residues 104–131 (NNSLPQTSPSGFTLTNQPSPSTYNSTGQ) and 160–171 (THNQPTKSTPTI). Residues 104–197 (NNSLPQTSPS…EPPSGKGTAH (94 aa)) are disordered. Residues 177–187 (TPPPPPPPLTS) are compositionally biased toward pro residues. Residues 204-224 (IAAILIGTIIISMLVAILMII) traverse the membrane as a helical segment. Over 225 to 444 (LWKYLRKPVL…SLPPPPTELL (220 aa)) the chain is Cytoplasmic. At T250 the chain carries Phosphothreonine. S269, S272, S279, and S295 each carry phosphoserine. 2 stretches are compositionally biased toward polar residues: residues 318 to 332 (SEDSADGSTVGTAVS) and 361 to 370 (SPLPNDSINP). 2 disordered regions span residues 318–337 (SEDSADGSTVGTAVSSDDAD) and 361–444 (SPLP…TELL).

As to expression, expressed in myeloid and lymphoid progenitors and increased in mature hematopoietic populations with the highest levels in granulocytes.

It localises to the membrane. Required for granulocyte differentiation and functionality of hematopoietic progenitor cells through the control of cell cycle progression and survival of hematopoietic progenitor cells. The polypeptide is Protein EVI2B (Mus musculus (Mouse)).